The following is a 342-amino-acid chain: Putative aryl-alcohol dehydrogenase AAD16 (342 aa).

Belongs to the aldo/keto reductase family. Aldo/keto reductase 2 subfamily.

Putative aryl-alcohol dehydrogenase. The sequence is that of Putative aryl-alcohol dehydrogenase AAD16 from Saccharomyces cerevisiae (strain ATCC 204508 / S288c) (Baker's yeast).